The sequence spans 243 residues: tRNA (guanine-N(1)-)-methyltransferase (243 aa).

Residues G111 and 130–135 (IGDYVL) contribute to the S-adenosyl-L-methionine site.

Belongs to the RNA methyltransferase TrmD family. As to quaternary structure, homodimer.

The protein resides in the cytoplasm. It catalyses the reaction guanosine(37) in tRNA + S-adenosyl-L-methionine = N(1)-methylguanosine(37) in tRNA + S-adenosyl-L-homocysteine + H(+). In terms of biological role, specifically methylates guanosine-37 in various tRNAs. In Acholeplasma laidlawii (strain PG-8A), this protein is tRNA (guanine-N(1)-)-methyltransferase.